A 519-amino-acid chain; its full sequence is Cytochrome P450 88A1 (519 aa).

The chain crosses the membrane as a helical span at residues 1–21 (MLGVGMAAAVLLGAVALLLAD). Heme is bound at residue Cys466.

This sequence belongs to the cytochrome P450 family. The cofactor is heme. Expressed in roots, developing leaves, the vegetative meristem, and suspension culture cells.

It localises to the membrane. It functions in the pathway plant hormone biosynthesis; gibberellin biosynthesis. The sequence is that of Cytochrome P450 88A1 (CYP88A1) from Zea mays (Maize).